A 124-amino-acid chain; its full sequence is Holo-[acyl-carrier-protein] synthase (124 aa).

Aspartate 5 and glutamate 56 together coordinate Mg(2+).

The protein belongs to the P-Pant transferase superfamily. AcpS family. The cofactor is Mg(2+).

It localises to the cytoplasm. The enzyme catalyses apo-[ACP] + CoA = holo-[ACP] + adenosine 3',5'-bisphosphate + H(+). Transfers the 4'-phosphopantetheine moiety from coenzyme A to a Ser of acyl-carrier-protein. This Campylobacter hominis (strain ATCC BAA-381 / DSM 21671 / CCUG 45161 / LMG 19568 / NCTC 13146 / CH001A) protein is Holo-[acyl-carrier-protein] synthase.